Reading from the N-terminus, the 203-residue chain is FMN-dependent NADH:quinone oxidoreductase 5 (203 aa).

FMN is bound by residues S9, 15-17 (SAS), 95-98 (MYNF), and 139-142 (TSGG).

This sequence belongs to the azoreductase type 1 family. In terms of assembly, homodimer. FMN serves as cofactor.

It catalyses the reaction 2 a quinone + NADH + H(+) = 2 a 1,4-benzosemiquinone + NAD(+). The catalysed reaction is N,N-dimethyl-1,4-phenylenediamine + anthranilate + 2 NAD(+) = 2-(4-dimethylaminophenyl)diazenylbenzoate + 2 NADH + 2 H(+). In terms of biological role, quinone reductase that provides resistance to thiol-specific stress caused by electrophilic quinones. Functionally, also exhibits azoreductase activity. Catalyzes the reductive cleavage of the azo bond in aromatic azo compounds to the corresponding amines. The sequence is that of FMN-dependent NADH:quinone oxidoreductase 5 from Pseudomonas fluorescens (strain ATCC BAA-477 / NRRL B-23932 / Pf-5).